We begin with the raw amino-acid sequence, 109 residues long: Large ribosomal subunit protein uL24 (109 aa).

This sequence belongs to the universal ribosomal protein uL24 family. Part of the 50S ribosomal subunit.

Its function is as follows. One of two assembly initiator proteins, it binds directly to the 5'-end of the 23S rRNA, where it nucleates assembly of the 50S subunit. One of the proteins that surrounds the polypeptide exit tunnel on the outside of the subunit. This is Large ribosomal subunit protein uL24 from Geotalea uraniireducens (strain Rf4) (Geobacter uraniireducens).